The chain runs to 348 residues: Autophagy-related protein 27 (348 aa).

A signal peptide spans 1–20 (MYRPDLLAFLLPLLAAPVFS). Residues 21–274 (AETLDCGKIR…DDGGDNSSSH (254 aa)) lie on the Lumenal side of the membrane. The MRH domain occupies 24–255 (LDCGKIRADG…TWHTKYACEK (232 aa)). Disulfide bonds link Cys26–Cys69, Cys82–Cys89, and Cys175–Cys253. Asn61 and Asn84 each carry an N-linked (GlcNAc...) asparagine glycan. Residues 180–208 (EGTEGEWVSEEKYEKRADEKKDDDKKEDG) show a composition bias toward basic and acidic residues. Residues 180 to 219 (EGTEGEWVSEEKYEKRADEKKDDDKKEDGGDKDEGESTLE) form a disordered region. Residues Asn226 and Asn270 are each glycosylated (N-linked (GlcNAc...) asparagine). A helical membrane pass occupies residues 275–295 (WGFFTWFVLIAFLLIAGYLIF). Topologically, residues 296 to 348 (SSWINFTRYGARGWDLLPHSDTIRDIPYLLKDFIRRILNTVQGTGSRGGYSAV) are cytoplasmic.

Belongs to the ATG27 family. Forms a complex with ATG9 and ATG23.

It is found in the cytoplasmic vesicle membrane. It localises to the golgi apparatus membrane. The protein resides in the mitochondrion membrane. Its subcellular location is the preautophagosomal structure membrane. In terms of biological role, effector of VPS34 phosphatidylinositol 3-phosphate kinase signaling. Regulates the cytoplasm to vacuole transport (Cvt) vesicle formation. Plays a role in ATG protein retrieval from the pre-autophagosomal structure (PAS) and is especially required for autophagy-dependent cycling of ATG9. Autophagy is required for proper vegetative growth, asexual/sexual reproduction, and full virulence. Autophagy is particularly involved in the biosynthesis of deoxynivalenol (DON), an important virulence determinant. This is Autophagy-related protein 27 from Gibberella zeae (strain ATCC MYA-4620 / CBS 123657 / FGSC 9075 / NRRL 31084 / PH-1) (Wheat head blight fungus).